A 503-amino-acid polypeptide reads, in one-letter code: MAAQSYYNGAYNSPPAYEQHDHTSDQFNRVSPRPSPSPVAYNNAPYYQSDDPHDPNSLRYSQQSIGSDNGAYVAGGRINEHDQYAENIPLKSANPYGNDHPPQPWMQQPTHYAPDPGMMEPQVPMRQKKKGFFQKKIAYVTYILTIAQIIVFIVELVKMGQLTGSPIQTKPQFNPMVGPSAYVQINMGARYTPCMKNVPGVQNATQQVLFPCPNATTTDSDCSLSELCGFDGVPNPHPGGSLDDKPAPDQWFRFIIPMFLHSGFVHIGFNLLVQMTMGADMERMIGWWRYGLVYLSSGIWGFVLGGNYAGQGEASCGCSGALFGILALFVLDLLYGWNDRQNPWVELIIMVLGIAVSFVLGLLPGLDNFSHLGGFTMGLALGLCVMRSPNALRERIGLARSPYVAMSGGVAAENADPDQNKTSTGSNIGGLGKFNPKGFFAGRKPLWWAWWLVRLGALVAVLIGFILLIVNFYKYPSSNCSWCYRFSCLPVNGWCDQGNLFSR.

Polar residues predominate over residues 1-11 (MAAQSYYNGAY). A disordered region spans residues 1–66 (MAAQSYYNGA…SLRYSQQSIG (66 aa)). The Cytoplasmic portion of the chain corresponds to 1-136 (MAAQSYYNGA…QKKKGFFQKK (136 aa)). Residues 137–157 (IAYVTYILTIAQIIVFIVELV) form a helical membrane-spanning segment. Over 158–253 (KMGQLTGSPI…DKPAPDQWFR (96 aa)) the chain is Extracellular. The chain crosses the membrane as a helical span at residues 254 to 274 (FIIPMFLHSGFVHIGFNLLVQ). Residues 275–283 (MTMGADMER) lie on the Cytoplasmic side of the membrane. The helical transmembrane segment at 284 to 304 (MIGWWRYGLVYLSSGIWGFVL) threads the bilayer. Residues 305–316 (GGNYAGQGEASC) lie on the Extracellular side of the membrane. A helical transmembrane segment spans residues 317–337 (GCSGALFGILALFVLDLLYGW). The active-site Nucleophile is Ser-319. At 338 to 342 (NDRQN) the chain is on the cytoplasmic side. Residues 343–363 (PWVELIIMVLGIAVSFVLGLL) traverse the membrane as a helical segment. At 364–365 (PG) the chain is on the extracellular side. A helical membrane pass occupies residues 366–386 (LDNFSHLGGFTMGLALGLCVM). His-371 is a catalytic residue. At 387 to 449 (RSPNALRERI…FAGRKPLWWA (63 aa)) the chain is on the cytoplasmic side. Residues 450-470 (WWLVRLGALVAVLIGFILLIV) form a helical membrane-spanning segment. Residues 471–503 (NFYKYPSSNCSWCYRFSCLPVNGWCDQGNLFSR) are Extracellular-facing.

Belongs to the peptidase S54 family.

It is found in the membrane. It carries out the reaction Cleaves type-1 transmembrane domains using a catalytic dyad composed of serine and histidine that are contributed by different transmembrane domains.. In terms of biological role, probable rhomboid-type serine protease that catalyzes intramembrane proteolysis. This chain is Rhomboid-type serine protease 2, found in Emericella nidulans (strain FGSC A4 / ATCC 38163 / CBS 112.46 / NRRL 194 / M139) (Aspergillus nidulans).